The sequence spans 343 residues: Methylthioribose-1-phosphate isomerase (343 aa).

Residues 48–50, Arg88, and Gln193 each bind substrate; that span reads RGA. The active-site Proton donor is the Asp234. 244–245 lines the substrate pocket; sequence NK.

The protein belongs to the eIF-2B alpha/beta/delta subunits family. MtnA subfamily.

It carries out the reaction 5-(methylsulfanyl)-alpha-D-ribose 1-phosphate = 5-(methylsulfanyl)-D-ribulose 1-phosphate. It participates in amino-acid biosynthesis; L-methionine biosynthesis via salvage pathway; L-methionine from S-methyl-5-thio-alpha-D-ribose 1-phosphate: step 1/6. Catalyzes the interconversion of methylthioribose-1-phosphate (MTR-1-P) into methylthioribulose-1-phosphate (MTRu-1-P). This is Methylthioribose-1-phosphate isomerase from Thermotoga neapolitana (strain ATCC 49049 / DSM 4359 / NBRC 107923 / NS-E).